A 202-amino-acid chain; its full sequence is Transmembrane 4 L6 family member 4 (202 aa).

At 1-9 (MCTGGCARC) the chain is on the cytoplasmic side. The chain crosses the membrane as a helical span at residues 10-30 (LGGTLIPLAVFGLLANILLFF). The Extracellular segment spans residues 31–48 (PGGKVVNDKSHLSDEVWY). A helical membrane pass occupies residues 49 to 69 (FGGILGSGVLMIFPALVFLGL). The Cytoplasmic portion of the chain corresponds to 70–93 (QNNDCCGCCGNEGCGKRFAMFTST). Residues 94 to 114 (LFAVIGFLGAGYSFIVSAVSI) form a helical membrane-spanning segment. Topologically, residues 115 to 158 (NKGPKCFMANGTWGYPFHDGDYLKDQALWSECEEPRDVVPWNLT) are extracellular. N156 carries N-linked (GlcNAc...) asparagine glycosylation. Residues 159-179 (LFSILLVIGGIQMVLCAIQVI) form a helical membrane-spanning segment. Topologically, residues 180–202 (NGLLGTLCGDCQCCGCCGGDGPV) are cytoplasmic.

The protein belongs to the L6 tetraspanin family.

Its subcellular location is the membrane. Regulates the adhesive and proliferative status of intestinal epithelial cells. Can mediate density-dependent cell proliferation. The chain is Transmembrane 4 L6 family member 4 (Tm4sf4) from Mus musculus (Mouse).